Here is a 388-residue protein sequence, read N- to C-terminus: Succinate--CoA ligase [ADP-forming] subunit beta (388 aa).

One can recognise an ATP-grasp domain in the interval 9 to 244 (KSLFAEYGLP…PSQDDAREAH (236 aa)). Residues Lys-46, 53 to 55 (GRG), Glu-99, Thr-102, and Glu-107 each bind ATP. Residues Asn-199 and Asp-213 each contribute to the Mg(2+) site. Substrate-binding positions include Asn-264 and 321 to 323 (GIV).

Belongs to the succinate/malate CoA ligase beta subunit family. As to quaternary structure, heterotetramer of two alpha and two beta subunits. Mg(2+) serves as cofactor.

It catalyses the reaction succinate + ATP + CoA = succinyl-CoA + ADP + phosphate. The catalysed reaction is GTP + succinate + CoA = succinyl-CoA + GDP + phosphate. It participates in carbohydrate metabolism; tricarboxylic acid cycle; succinate from succinyl-CoA (ligase route): step 1/1. Its function is as follows. Succinyl-CoA synthetase functions in the citric acid cycle (TCA), coupling the hydrolysis of succinyl-CoA to the synthesis of either ATP or GTP and thus represents the only step of substrate-level phosphorylation in the TCA. The beta subunit provides nucleotide specificity of the enzyme and binds the substrate succinate, while the binding sites for coenzyme A and phosphate are found in the alpha subunit. The sequence is that of Succinate--CoA ligase [ADP-forming] subunit beta from Shewanella baltica (strain OS195).